The chain runs to 185 residues: Threonylcarbamoyl-AMP synthase (185 aa).

The YrdC-like domain occupies 5 to 185; sequence ADRIADAVAA…DLQSGETLRR (181 aa).

It belongs to the SUA5 family. TsaC subfamily.

Its subcellular location is the cytoplasm. The catalysed reaction is L-threonine + hydrogencarbonate + ATP = L-threonylcarbamoyladenylate + diphosphate + H2O. Its function is as follows. Required for the formation of a threonylcarbamoyl group on adenosine at position 37 (t(6)A37) in tRNAs that read codons beginning with adenine. Catalyzes the conversion of L-threonine, HCO(3)(-)/CO(2) and ATP to give threonylcarbamoyl-AMP (TC-AMP) as the acyladenylate intermediate, with the release of diphosphate. The polypeptide is Threonylcarbamoyl-AMP synthase (Chromohalobacter salexigens (strain ATCC BAA-138 / DSM 3043 / CIP 106854 / NCIMB 13768 / 1H11)).